The following is a 248-amino-acid chain: NAD(P)H-quinone oxidoreductase subunit K 1 (248 aa).

Positions 1–2 are excised as a propeptide; that stretch reads MS. [4Fe-4S] cluster-binding residues include cysteine 62, cysteine 63, cysteine 127, and cysteine 158. Residues 228–248 are disordered; that stretch reads MGMPVPPALTTSQQKEQLNRG. Residues 236-248 show a composition bias toward polar residues; it reads LTTSQQKEQLNRG.

It belongs to the complex I 20 kDa subunit family. As to quaternary structure, NDH-1 can be composed of about 15 different subunits; different subcomplexes with different compositions have been identified which probably have different functions. [4Fe-4S] cluster is required as a cofactor.

It localises to the cellular thylakoid membrane. It carries out the reaction a plastoquinone + NADH + (n+1) H(+)(in) = a plastoquinol + NAD(+) + n H(+)(out). The enzyme catalyses a plastoquinone + NADPH + (n+1) H(+)(in) = a plastoquinol + NADP(+) + n H(+)(out). In terms of biological role, NDH-1 shuttles electrons from an unknown electron donor, via FMN and iron-sulfur (Fe-S) centers, to quinones in the respiratory and/or the photosynthetic chain. The immediate electron acceptor for the enzyme in this species is believed to be plastoquinone. Couples the redox reaction to proton translocation, and thus conserves the redox energy in a proton gradient. Cyanobacterial NDH-1 also plays a role in inorganic carbon-concentration. This is NAD(P)H-quinone oxidoreductase subunit K 1 from Synechocystis sp. (strain ATCC 27184 / PCC 6803 / Kazusa).